Here is an 880-residue protein sequence, read N- to C-terminus: Translation initiation factor IF-2 (880 aa).

The span at 143–228 (EAEAKAKAKA…EAERNGDHHI (86 aa)) shows a compositional bias: basic and acidic residues. Residues 143 to 289 (EAEAKAKAKA…APESMAHGFN (147 aa)) form a disordered region. Residues 249 to 262 (GRRARNKSNAKKRG) show a composition bias toward basic residues. Residues 380 to 549 (SRAPVVTIMG…LLQAEVLELK (170 aa)) form the tr-type G domain. Positions 389 to 396 (GHVDHGKT) are G1. Residue 389–396 (GHVDHGKT) participates in GTP binding. Residues 414–418 (GITQH) form a G2 region. A G3 region spans residues 435 to 438 (DTPG). GTP-binding positions include 435 to 439 (DTPGH) and 489 to 492 (NKMD). The tract at residues 489 to 492 (NKMD) is G4. Positions 525–527 (SAK) are G5.

Belongs to the TRAFAC class translation factor GTPase superfamily. Classic translation factor GTPase family. IF-2 subfamily.

It localises to the cytoplasm. Functionally, one of the essential components for the initiation of protein synthesis. Protects formylmethionyl-tRNA from spontaneous hydrolysis and promotes its binding to the 30S ribosomal subunits. Also involved in the hydrolysis of GTP during the formation of the 70S ribosomal complex. This is Translation initiation factor IF-2 from Shewanella putrefaciens (strain CN-32 / ATCC BAA-453).